The sequence spans 932 residues: 2-oxoglutarate dehydrogenase E1 component (932 aa).

It belongs to the alpha-ketoglutarate dehydrogenase family. In terms of assembly, homodimer. Part of the 2-oxoglutarate dehydrogenase (OGDH) complex composed of E1 (2-oxoglutarate dehydrogenase), E2 (dihydrolipoamide succinyltransferase) and E3 (dihydrolipoamide dehydrogenase); the complex contains multiple copies of the three enzymatic components (E1, E2 and E3). The cofactor is thiamine diphosphate.

The catalysed reaction is N(6)-[(R)-lipoyl]-L-lysyl-[protein] + 2-oxoglutarate + H(+) = N(6)-[(R)-S(8)-succinyldihydrolipoyl]-L-lysyl-[protein] + CO2. In terms of biological role, E1 component of the 2-oxoglutarate dehydrogenase (OGDH) complex which catalyzes the decarboxylation of 2-oxoglutarate, the first step in the conversion of 2-oxoglutarate to succinyl-CoA and CO(2). In Staphylococcus aureus (strain MRSA252), this protein is 2-oxoglutarate dehydrogenase E1 component.